Reading from the N-terminus, the 63-residue chain is AASDCCSACICDRRAPPYFECTCGDTFDHCPAACNKCVCTRSIPPQCRCTDRTQGRCPLTPCA.

Disulfide bonds link Cys-5–Cys-62, Cys-6–Cys-23, Cys-9–Cys-57, Cys-11–Cys-21, Cys-30–Cys-37, Cys-34–Cys-49, and Cys-39–Cys-47.

This sequence belongs to the Bowman-Birk serine protease inhibitor family.

This is Bowman-Birk type proteinase inhibitor B-II from Arachis hypogaea (Peanut).